We begin with the raw amino-acid sequence, 268 residues long: 4-hydroxy-tetrahydrodipicolinate reductase (268 aa).

NAD(+) contacts are provided by residues 8–13 (GGGGKM) and E34. An NADP(+)-binding site is contributed by K35. NAD(+) contacts are provided by residues 98-100 (GST) and 122-125 (APNM). H155 functions as the Proton donor/acceptor in the catalytic mechanism. A (S)-2,3,4,5-tetrahydrodipicolinate-binding site is contributed by H156. K159 serves as the catalytic Proton donor. 165 to 166 (GT) contacts (S)-2,3,4,5-tetrahydrodipicolinate.

Belongs to the DapB family.

It localises to the cytoplasm. The enzyme catalyses (S)-2,3,4,5-tetrahydrodipicolinate + NAD(+) + H2O = (2S,4S)-4-hydroxy-2,3,4,5-tetrahydrodipicolinate + NADH + H(+). It carries out the reaction (S)-2,3,4,5-tetrahydrodipicolinate + NADP(+) + H2O = (2S,4S)-4-hydroxy-2,3,4,5-tetrahydrodipicolinate + NADPH + H(+). The protein operates within amino-acid biosynthesis; L-lysine biosynthesis via DAP pathway; (S)-tetrahydrodipicolinate from L-aspartate: step 4/4. Functionally, catalyzes the conversion of 4-hydroxy-tetrahydrodipicolinate (HTPA) to tetrahydrodipicolinate. The chain is 4-hydroxy-tetrahydrodipicolinate reductase from Syntrophus aciditrophicus (strain SB).